Reading from the N-terminus, the 71-residue chain is MIFKVFYQENADEVPVREKTKTLYIEAESERDVRRKLEGRPINIEYIQPLEGAHLEYEKKSPNFQVLEISS.

It belongs to the RNA polymerase subunit epsilon family. Monomer. RNAP is composed of a core of 2 alpha, a beta and a beta' subunit. The core is associated with a delta subunit, and at least one of epsilon or omega. When a sigma factor is associated with the core the holoenzyme is formed, which can initiate transcription.

It catalyses the reaction RNA(n) + a ribonucleoside 5'-triphosphate = RNA(n+1) + diphosphate. Its function is as follows. A non-essential component of RNA polymerase (RNAP). Has a similar structure to bacteriophage T7 protein Gp2 (AC P03704), which is known to bind to RNAP in the DNA binding-cleft. Unlike Gp2 however, this protein does not inhibit transcription initiation. The sequence is that of DNA-directed RNA polymerase subunit epsilon from Geobacillus stearothermophilus (strain DSM 13240 / CIP 106956 / 10).